The primary structure comprises 133 residues: Putative biopolymer transport protein ExbD-like 1 (133 aa).

Residues 1-15 (MNYDNYWDEDKPELN) lie on the Cytoplasmic side of the membrane. Residues 16-32 (ITPLVDVMLVLLAILMV) traverse the membrane as a helical segment. Residues 33–133 (TTPTLTYKEE…FLKVSLITSP (101 aa)) are Periplasmic-facing.

The protein belongs to the ExbD/TolR family.

It is found in the cell inner membrane. In Helicobacter pylori (strain ATCC 700392 / 26695) (Campylobacter pylori), this protein is Putative biopolymer transport protein ExbD-like 1.